Reading from the N-terminus, the 161-residue chain is Cyclic pyranopterin monophosphate synthase (161 aa).

Substrate contacts are provided by residues 73–75 (LCH) and 110–111 (ME). D125 is a catalytic residue.

It belongs to the MoaC family. As to quaternary structure, homohexamer; trimer of dimers.

The enzyme catalyses (8S)-3',8-cyclo-7,8-dihydroguanosine 5'-triphosphate = cyclic pyranopterin phosphate + diphosphate. It participates in cofactor biosynthesis; molybdopterin biosynthesis. In terms of biological role, catalyzes the conversion of (8S)-3',8-cyclo-7,8-dihydroguanosine 5'-triphosphate to cyclic pyranopterin monophosphate (cPMP). This Pseudomonas syringae pv. syringae (strain B728a) protein is Cyclic pyranopterin monophosphate synthase.